A 465-amino-acid chain; its full sequence is Alpha-2A adrenergic receptor (465 aa).

The Extracellular portion of the chain corresponds to 1-48 (MFRQEQPLAEGSFAPMGSLQPDAGNASWNGTEAPGGGARATPYSLQVT). 2 N-linked (GlcNAc...) asparagine glycosylation sites follow: Asn25 and Asn29. A helical membrane pass occupies residues 49–74 (LTLVCLAGLLMLLTVFGNVLVIIAVF). The Cytoplasmic portion of the chain corresponds to 75–85 (TSRALKAPQNL). The chain crosses the membrane as a helical span at residues 86–111 (FLVSLASADILVATLVIPFSLANEVM). Over 112-121 (GYWYFGKAWC) the chain is Extracellular. A disulfide bond links Cys121 and Cys203. Residues 122 to 144 (EIYLALDVLFCTSSIVHLCAISL) form a helical membrane-spanning segment. The Cytoplasmic segment spans residues 145 to 166 (DRYWSITQAIEYNLKRTPRRIK). Residues 167–187 (AIIITVWVISAVISFPPLISI) traverse the membrane as a helical segment. The Extracellular portion of the chain corresponds to 188–209 (EKKGGGGGPQPAEPRCEINDQK). Residues 210–232 (WYVISSCIGSFFAPCLIMILVYV) traverse the membrane as a helical segment. Over 233-389 (RIYQIAKRRT…RQNREKRFTF (157 aa)) the chain is Cytoplasmic. A disordered region spans residues 242–368 (TRVPPSRRGP…TPAAGPGEER (127 aa)). The span at 313-330 (SSDHAERPPGPRRPERGP) shows a compositional bias: basic and acidic residues. At Ser346 the chain carries Phosphoserine. An Omega-N-methylarginine modification is found at Arg368. The helical transmembrane segment at 390-410 (VLAVVIGVFVVCWFPFFFTYT) threads the bilayer. Residues 411-424 (LTAVGCSVPRTLFK) lie on the Extracellular side of the membrane. The chain crosses the membrane as a helical span at residues 425 to 444 (FFFWFGYCNSSLNPVIYTIF). Topologically, residues 445 to 465 (NHDFRRAFKKILCRGDRKRIV) are cytoplasmic. A lipid anchor (S-palmitoyl cysteine) is attached at Cys457.

Belongs to the G-protein coupled receptor 1 family. Adrenergic receptor subfamily. ADRA2A sub-subfamily.

It localises to the cell membrane. Functionally, alpha-2 adrenergic receptors mediate the catecholamine-induced inhibition of adenylate cyclase through the action of G proteins. The rank order of potency for agonists of this receptor is oxymetazoline &gt; clonidine &gt; epinephrine &gt; norepinephrine &gt; phenylephrine &gt; dopamine &gt; p-synephrine &gt; p-tyramine &gt; serotonin = p-octopamine. For antagonists, the rank order is yohimbine &gt; phentolamine = mianserine &gt; chlorpromazine = spiperone = prazosin &gt; propanolol &gt; alprenolol = pindolol. The sequence is that of Alpha-2A adrenergic receptor from Homo sapiens (Human).